The sequence spans 185 residues: Elongation factor P (185 aa).

It belongs to the elongation factor P family.

The protein localises to the cytoplasm. The protein operates within protein biosynthesis; polypeptide chain elongation. In terms of biological role, involved in peptide bond synthesis. Stimulates efficient translation and peptide-bond synthesis on native or reconstituted 70S ribosomes in vitro. Probably functions indirectly by altering the affinity of the ribosome for aminoacyl-tRNA, thus increasing their reactivity as acceptors for peptidyl transferase. The polypeptide is Elongation factor P (Streptococcus equi subsp. equi (strain 4047)).